A 92-amino-acid chain; its full sequence is MTKGTSSFGKRRNKTHTLCRRCGRSSYHIQKSKCAQCGYPAAKLRSYHWSVKAKRRKTTGTGRMRHLKIVRRRFRNGFKEGKPTPKKAVASS.

Zn(2+)-binding residues include Cys-19, Cys-22, Cys-34, and Cys-37. Residues 19–37 (CRRCGRSSYHIQKSKCAQC) form a C4-type zinc finger.

It belongs to the eukaryotic ribosomal protein eL37 family. It depends on Zn(2+) as a cofactor.

In terms of biological role, binds to the 23S rRNA. The chain is Large ribosomal subunit protein eL37 (RpL37) from Spodoptera frugiperda (Fall armyworm).